Here is a 384-residue protein sequence, read N- to C-terminus: tRNA 2-selenouridine synthase (384 aa).

One can recognise a Rhodanese domain in the interval 15–138; sequence FVAGKPLIDL…MRQYLIGVIE (124 aa). Cys98 serves as the catalytic S-selanylcysteine intermediate.

Belongs to the SelU family. As to quaternary structure, monomer.

The catalysed reaction is 5-methylaminomethyl-2-thiouridine(34) in tRNA + selenophosphate + (2E)-geranyl diphosphate + H2O + H(+) = 5-methylaminomethyl-2-selenouridine(34) in tRNA + (2E)-thiogeraniol + phosphate + diphosphate. It catalyses the reaction 5-methylaminomethyl-2-thiouridine(34) in tRNA + (2E)-geranyl diphosphate = 5-methylaminomethyl-S-(2E)-geranyl-thiouridine(34) in tRNA + diphosphate. It carries out the reaction 5-methylaminomethyl-S-(2E)-geranyl-thiouridine(34) in tRNA + selenophosphate + H(+) = 5-methylaminomethyl-2-(Se-phospho)selenouridine(34) in tRNA + (2E)-thiogeraniol. The enzyme catalyses 5-methylaminomethyl-2-(Se-phospho)selenouridine(34) in tRNA + H2O = 5-methylaminomethyl-2-selenouridine(34) in tRNA + phosphate. Functionally, involved in the post-transcriptional modification of the uridine at the wobble position (U34) of tRNA(Lys), tRNA(Glu) and tRNA(Gln). Catalyzes the conversion of 2-thiouridine (S2U-RNA) to 2-selenouridine (Se2U-RNA). Acts in a two-step process involving geranylation of 2-thiouridine (S2U) to S-geranyl-2-thiouridine (geS2U) and subsequent selenation of the latter derivative to 2-selenouridine (Se2U) in the tRNA chain. The polypeptide is tRNA 2-selenouridine synthase (Shewanella sp. (strain MR-4)).